The chain runs to 442 residues: MAADPSPPSAMAQPRPLNLNNEVVKMRKEVKRIRVLVIRKLVRSVSRLKSKKGSEDALLKNQRRAQRLLQEIHAMKELKPDVITKSALNDDINFEKTCKKPDSTATERAIARLAVHPLLKRKVDALKAAIQAFKDARQNAPEAESSKSASKESQCEDIPRSQAEASESQHPERTVVGEQKGKDKDPTTAKKAGSGSKEKLAKGKQGPKAVATPHSPGKPSEKGAGINSERQGAPTPGNHSQGKASTRTTEDSVCEPDDNSISKEEVSEEEKEYFDDSTEERFYKQSSASEDSDSGDDFFIGKVRRTRKKECAVPSSAKEQKPLPKVSSKTNTLETHWDIRNDKHKLIPEARKLESVFFHSLSGPKSSRRDPREQAPKNKAPDIPENEPPIQNKFTKSARRGFESAKQPSYAPLHPSWEASRRRKEQQSKIAVFQGKKITFDD.

Coiled coils occupy residues 55–77 and 118–140; these read EDAL…AMKE and LLKR…RQNA. 2 disordered regions span residues 137–336 and 358–442; these read RQNA…LETH and FHSL…TFDD. Basic and acidic residues-rich tracts occupy residues 149 to 159 and 167 to 188; these read ASKESQCEDIP and ESQH…DPTT. A Glycyl lysine isopeptide (Lys-Gly) (interchain with G-Cter in SUMO2) cross-link involves residue Lys202. Position 215 is a phosphoserine (Ser215). Polar residues predominate over residues 237–247; the sequence is GNHSQGKASTR. A compositionally biased stretch (acidic residues) spans 266-278; sequence VSEEEKEYFDDST. A phosphoserine mark is found at Ser277, Ser292, and Ser294. A Glycyl lysine isopeptide (Lys-Gly) (interchain with G-Cter in SUMO2) cross-link involves residue Lys329. Ser362 carries the post-translational modification Phosphoserine. Basic and acidic residues predominate over residues 367–382; that stretch reads SRRDPREQAPKNKAPD.

In terms of assembly, interacts with SRF. Forms complexes with SRF and SRF cofactors ARID2, MYOCD and NKX2-5. Interacts with the N-terminus of SLC2A4.

It localises to the cytoplasm. Its subcellular location is the perinuclear region. In terms of biological role, may be involved in regulating transcriptional activation of cardiac genes during the aging process. May play a role in biosynthesis and/or processing of SLC2A4 in adipose cells. This Rattus norvegicus (Rat) protein is Serum response factor-binding protein 1.